We begin with the raw amino-acid sequence, 245 residues long: Acetylglutamate kinase (245 aa).

Residues glycine 41–glycine 42, arginine 63, and asparagine 156 contribute to the substrate site.

Belongs to the acetylglutamate kinase family. ArgB subfamily.

It localises to the cytoplasm. It carries out the reaction N-acetyl-L-glutamate + ATP = N-acetyl-L-glutamyl 5-phosphate + ADP. The protein operates within amino-acid biosynthesis; L-arginine biosynthesis; N(2)-acetyl-L-ornithine from L-glutamate: step 2/4. In terms of biological role, catalyzes the ATP-dependent phosphorylation of N-acetyl-L-glutamate. This chain is Acetylglutamate kinase, found in Streptococcus mutans serotype c (strain ATCC 700610 / UA159).